The chain runs to 424 residues: MKKSQELMTRAKRVIPGGVNSPVRAFNAVGGCPRFIKSASGAYIQDVEGNSYIDYIGSWGPMILGHSNPKILQAVSKVMIKGLSFGAATELEVEMAELITRLVPSVEMVRMVNSGTEAVMSALRLARGYTKREKVIKFAGCYHGHSDSMLVKAGSGALVNGVPDSAGVTIGVAKDTLVAEYNDIDSVNLLFEQNKNEIAAVILEPVAANMGVVLPKDGFLEKVRQLCSQNGALLIFDEVITGFRLAAGGAQEYFGVTADLVTYGKIIGGGMPVGAYGGRREIMECISPIGPVYQAGTLSGNPLAMAAGITMLTELSENPQIYEHINRLGTKLGDGLRKITSNTVNSVGSLISMFMTENEVIDIRSAMASDTGEYSRLFNHLLNKGIYIAPAQFEAMFISNAHTDEDIEKTLSAIEESLNEMRKK.

N6-(pyridoxal phosphate)lysine is present on lysine 265.

This sequence belongs to the class-III pyridoxal-phosphate-dependent aminotransferase family. HemL subfamily. In terms of assembly, homodimer. Pyridoxal 5'-phosphate is required as a cofactor.

It is found in the cytoplasm. It carries out the reaction (S)-4-amino-5-oxopentanoate = 5-aminolevulinate. It participates in porphyrin-containing compound metabolism; protoporphyrin-IX biosynthesis; 5-aminolevulinate from L-glutamyl-tRNA(Glu): step 2/2. This is Glutamate-1-semialdehyde 2,1-aminomutase from Alkaliphilus oremlandii (strain OhILAs) (Clostridium oremlandii (strain OhILAs)).